The sequence spans 332 residues: Probable allantoicase (332 aa).

This sequence belongs to the allantoicase family.

The enzyme catalyses allantoate + H2O = (S)-ureidoglycolate + urea. It functions in the pathway nitrogen metabolism; (S)-allantoin degradation; (S)-ureidoglycolate from allantoate (aminidohydrolase route): step 1/1. The sequence is that of Probable allantoicase from Pseudomonas paraeruginosa (strain DSM 24068 / PA7) (Pseudomonas aeruginosa (strain PA7)).